Reading from the N-terminus, the 216-residue chain is Ribosomal RNA small subunit methyltransferase G (216 aa).

S-adenosyl-L-methionine is bound by residues glycine 86, leucine 91, 137–138 (VE), and arginine 155.

This sequence belongs to the methyltransferase superfamily. RNA methyltransferase RsmG family.

It localises to the cytoplasm. The catalysed reaction is guanosine(527) in 16S rRNA + S-adenosyl-L-methionine = N(7)-methylguanosine(527) in 16S rRNA + S-adenosyl-L-homocysteine. In terms of biological role, specifically methylates the N7 position of guanine in position 527 of 16S rRNA. The sequence is that of Ribosomal RNA small subunit methyltransferase G from Lawsonia intracellularis (strain PHE/MN1-00).